Consider the following 282-residue polypeptide: Nudix hydrolase 7 (282 aa).

The Nudix hydrolase domain occupies 101-233; sequence SHVVGAGALV…KNEMFKFMAN (133 aa). The Nudix box motif lies at 139-160; it reads GVINEGEDIWTGVAREVEEETG. Mg(2+) is bound by residues Glu-154 and Glu-158.

This sequence belongs to the Nudix hydrolase family. Homodimer. Interacts with RACK1A, GG1 and GG2. It depends on Mg(2+) as a cofactor. In terms of tissue distribution, expressed in stems, leaves, roots, flowers and siliques.

It is found in the nucleus. It localises to the cytoplasm. The protein resides in the cell membrane. It catalyses the reaction ADP-D-ribose + H2O = D-ribose 5-phosphate + AMP + 2 H(+). It carries out the reaction NAD(+) + H2O = beta-nicotinamide D-ribonucleotide + AMP + 2 H(+). The enzyme catalyses NADH + H2O = reduced beta-nicotinamide D-ribonucleotide + AMP + 2 H(+). With respect to regulation, not inhibited by fluoride. Functionally, mediates the hydrolysis of some nucleoside diphosphate derivatives. Can use both NADH and ADP-ribose as substrates, but not 8-oxo-dGTP, cyclic ADP-ribose, GDP-mannose, UDP-glucose, ATP, or GTP. Exerts negative control of EDS1 signaling. The protein is Nudix hydrolase 7 (NUDT7) of Arabidopsis thaliana (Mouse-ear cress).